Consider the following 26-residue polypeptide: Coenzyme PQQ synthesis protein A (26 aa).

Positions Glu16–Tyr20 form a cross-link, pyrroloquinoline quinone (Glu-Tyr).

The protein belongs to the PqqA family.

It functions in the pathway cofactor biosynthesis; pyrroloquinoline quinone biosynthesis. Its function is as follows. Required for coenzyme pyrroloquinoline quinone (PQQ) biosynthesis. PQQ is probably formed by cross-linking a specific glutamate to a specific tyrosine residue and excising these residues from the peptide. The polypeptide is Coenzyme PQQ synthesis protein A (Cereibacter sphaeroides (strain ATCC 17029 / ATH 2.4.9) (Rhodobacter sphaeroides)).